The primary structure comprises 369 residues: Aminomethyltransferase (369 aa).

Belongs to the GcvT family. As to quaternary structure, the glycine cleavage system is composed of four proteins: P, T, L and H.

It carries out the reaction N(6)-[(R)-S(8)-aminomethyldihydrolipoyl]-L-lysyl-[protein] + (6S)-5,6,7,8-tetrahydrofolate = N(6)-[(R)-dihydrolipoyl]-L-lysyl-[protein] + (6R)-5,10-methylene-5,6,7,8-tetrahydrofolate + NH4(+). Functionally, the glycine cleavage system catalyzes the degradation of glycine. In Xanthomonas euvesicatoria pv. vesicatoria (strain 85-10) (Xanthomonas campestris pv. vesicatoria), this protein is Aminomethyltransferase.